Reading from the N-terminus, the 1406-residue chain is DNA-directed RNA polymerase subunit beta' (1406 aa).

Zn(2+) is bound by residues Cys-70, Cys-72, Cys-85, and Cys-88. Mg(2+)-binding residues include Asp-460, Asp-462, and Asp-464. Zn(2+) contacts are provided by Cys-814, Cys-888, Cys-895, and Cys-898.

The protein belongs to the RNA polymerase beta' chain family. As to quaternary structure, the RNAP catalytic core consists of 2 alpha, 1 beta, 1 beta' and 1 omega subunit. When a sigma factor is associated with the core the holoenzyme is formed, which can initiate transcription. Requires Mg(2+) as cofactor. Zn(2+) serves as cofactor.

The enzyme catalyses RNA(n) + a ribonucleoside 5'-triphosphate = RNA(n+1) + diphosphate. DNA-dependent RNA polymerase catalyzes the transcription of DNA into RNA using the four ribonucleoside triphosphates as substrates. The chain is DNA-directed RNA polymerase subunit beta' from Colwellia psychrerythraea (strain 34H / ATCC BAA-681) (Vibrio psychroerythus).